Reading from the N-terminus, the 169-residue chain is NADH-quinone oxidoreductase subunit I (169 aa).

2 4Fe-4S ferredoxin-type domains span residues 61-90 (RRYDNGEERCIACKLCEAVCPALAITIESE) and 100-129 (TRYDIDLTKCIFCGFCEESCPVDSIVETHI). [4Fe-4S] cluster-binding residues include Cys-70, Cys-73, Cys-76, Cys-80, Cys-109, Cys-112, Cys-115, and Cys-119.

Belongs to the complex I 23 kDa subunit family. In terms of assembly, NDH-1 is composed of 14 different subunits. Subunits NuoA, H, J, K, L, M, N constitute the membrane sector of the complex. Requires [4Fe-4S] cluster as cofactor.

It is found in the cell inner membrane. It catalyses the reaction a quinone + NADH + 5 H(+)(in) = a quinol + NAD(+) + 4 H(+)(out). Its function is as follows. NDH-1 shuttles electrons from NADH, via FMN and iron-sulfur (Fe-S) centers, to quinones in the respiratory chain. The immediate electron acceptor for the enzyme in this species is believed to be ubiquinone. Couples the redox reaction to proton translocation (for every two electrons transferred, four hydrogen ions are translocated across the cytoplasmic membrane), and thus conserves the redox energy in a proton gradient. The sequence is that of NADH-quinone oxidoreductase subunit I from Verminephrobacter eiseniae (strain EF01-2).